A 367-amino-acid polypeptide reads, in one-letter code: Alginate lyase (367 aa).

The N-terminal stretch at 1–27 is a signal peptide; that stretch reads MKTSHLIRITLPGALAAALLASQVSQA. Residues 65–66, 138–139, and Y256 each bind substrate; these read SK and HT.

This sequence belongs to the polysaccharide lyase 5 family.

It localises to the periplasm. It carries out the reaction Eliminative cleavage of alginate to give oligosaccharides with 4-deoxy-alpha-L-erythro-hex-4-enuronosyl groups at their non-reducing ends and beta-D-mannuronate at their reducing end.. In terms of biological role, catalyzes the depolymerization of alginate by cleaving the beta-1,4 glycosidic bond between two adjacent sugar residues via a beta-elimination mechanism. May serve to degrade mislocalized alginate that is trapped in the periplasmic space. The protein is Alginate lyase of Pseudomonas paraeruginosa (strain DSM 24068 / PA7) (Pseudomonas aeruginosa (strain PA7)).